A 648-amino-acid polypeptide reads, in one-letter code: Sodium/nucleoside cotransporter 1 (648 aa).

Residues 1 to 80 (MADNTQRQRE…ARSFCREHRQ (80 aa)) are Cytoplasmic-facing. The helical transmembrane segment at 81–104 (LFGWICKGLLSTACLGFLMVACLL) threads the bilayer. Over 105–109 (DLQRA) the chain is Extracellular. A helical membrane pass occupies residues 110 to 128 (LALLIITCVVLVFLAYDLL). The Cytoplasmic segment spans residues 129 to 147 (KRLLGSKLRRCVKFQGHSC). The helical transmembrane segment at 148–167 (LSLWLKRGLALAAGVGLILW) threads the bilayer. Residues 168-178 (LSLDTAQRPEQ) are Extracellular-facing. Residues 179–195 (LVSFAGICVFLVLLFAG) form a helical membrane-spanning segment. Over 196–201 (SKHHRA) the chain is Cytoplasmic. A helical transmembrane segment spans residues 202 to 222 (VSWRAVSWGLGLQFVLGLFVI). At 223–261 (RTEPGFIAFQWLGDQIQVFLSYTEAGSSFVFGEALVKDV) the chain is on the extracellular side. Residues 262–283 (FAFQVLPIIIFFSCVMSVLYYL) form a helical membrane-spanning segment. Residues 284 to 294 (GLMQWVILKIA) lie on the Cytoplasmic side of the membrane. The helical transmembrane segment at 295–318 (WLMQVTMGTSATETLSVAGNIFVS) threads the bilayer. The Extracellular portion of the chain corresponds to 319-337 (QTEAPLLIRPYLADMTLSE). Residues 338–360 (VHVVMTGGYATIAGSLLGAYISF) form a helical membrane-spanning segment. Residues 361 to 366 (GIDAAS) are Cytoplasmic-facing. Residues 367-386 (LIAASVMAAPCALALSKLVY) traverse the membrane as a helical segment. Residues 387–423 (PEVEESKFRSENGVKLTYGDAQNLLEAASAGAAISVK) lie on the Extracellular side of the membrane. Residues 424–446 (VVANIAANLIAFLAVLAFVNAAL) traverse the membrane as a helical segment. The Cytoplasmic segment spans residues 447–457 (SWLGDMVDIQG). The helical transmembrane segment at 458-479 (LSFQLICSYVLRPVAFLMGVAW) threads the bilayer. The Extracellular segment spans residues 480-534 (EDCPVVAELLGIKFFLNEFVAYQELSQYKQRRLAGAEEWLGDKKQWISVRAEILT). A helical membrane pass occupies residues 535–558 (TYALCGFANFSSIGIMLGGLTSLV). The Cytoplasmic portion of the chain corresponds to 559–569 (PQRRSDFSQIV). A helical transmembrane segment spans residues 570–592 (LRALITGAFVSLLNACVAGILYV). Residues 593 to 648 (PRGVEVDCVSLLNQTVSSSSFEVYLCCRQVFQSTSSEFSQVALDNCCRFYNHTVCT) lie on the Extracellular side of the membrane. N-linked (GlcNAc...) asparagine glycosylation is found at N605 and N643.

This sequence belongs to the concentrative nucleoside transporter (CNT) (TC 2.A.41) family. Post-translationally, N-glycosylated. N-glycosylation is required for localization to the plasma membrane and the transporter activity. In terms of tissue distribution, expressed predominantly in the brush-border membranes of the polarized epithelial cells of jejunum and renal cortical tubules and in the bile canalicular membranes of liver parenchymal cells.

The protein localises to the cell membrane. It localises to the apical cell membrane. It catalyses the reaction uridine(out) + Na(+)(out) = uridine(in) + Na(+)(in). The enzyme catalyses thymidine(out) + Na(+)(out) = thymidine(in) + Na(+)(in). It carries out the reaction cytidine(out) + Na(+)(out) = cytidine(in) + Na(+)(in). The catalysed reaction is adenosine(out) + Na(+)(out) = adenosine(in) + Na(+)(in). Due to its high apparent affinity but slow transport, adenosine could act as a negative regulator of pyrimidine transport under some conditions. Functionally, sodium and pyrimidine nucleoside symporter of the plasma membrane that imports uridine, thymidine and cytidine into cells by coupling their transport to the transmembrane sodium electrochemical gradient. Also transports adenosine, an atypical substrate transported with high apparent affinity, but low maximum velocity. Therefore, exhibits the transport characteristics of the nucleoside transport system cit or N2 subtype (N2/cit). Involved in renal nucleoside (re)absorption. This chain is Sodium/nucleoside cotransporter 1, found in Rattus norvegicus (Rat).